The sequence spans 678 residues: Ribosome biogenesis protein BOP1 homolog (678 aa).

The span at 1–10 (MGHSDGDHGS) shows a compositional bias: basic and acidic residues. The tract at residues 1 to 73 (MGHSDGDHGS…VAPRNTIGDV (73 aa)) is disordered. Residues 24–63 (WSDDDDEGSLSFEDSGEGSDAESDEPDAPAVEESDSSEDE) are compositionally biased toward acidic residues. WD repeat units follow at residues 343–384 (GHNG…KVWN), 386–424 (GGVV…EDAQ), 463–505 (IHHK…SHHP), 508–548 (KLPG…KKLE), 549–588 (SGVR…RPYK), 592–631 (NHSK…DLNQ), and 647–678 (SDGR…LYCD).

Belongs to the WD repeat BOP1/ERB1 family.

Its subcellular location is the nucleus. The protein resides in the nucleolus. It localises to the nucleoplasm. Required for maturation of ribosomal RNAs and formation of the large ribosomal subunit. This Oryza sativa subsp. japonica (Rice) protein is Ribosome biogenesis protein BOP1 homolog.